Reading from the N-terminus, the 1008-residue chain is MEGDDLFDEFGNLIGVDPFDSDEEESVLDEQEQYQTNTFEGSGNNNEIESRQLTSLGSKKELGISLEHPYGKEVEVLMETKNTQSPQTPLVEPVTERTKLQEHTIFTQLKKNIPKTRYNRDYMLSMANIPERIINVGVIGPLHSGKTSLMDLLVIDSHKRIPDMSKNVELGWKPLRYLDNLKQEIDRGLSIKLNGSTLLCTDLESKSRMINFLDAPGHVNFMDETAVALAASDLVLIVIDVVEGVTFVVEQLIKQSIKNNVAMCFVINKLDRLILDLKLPPMDAYLKLNHIIANINSFTKGNVFSPIDNNIIFASTKLGFTFTIKEFVSYYYAHSIPSSKIDDFTTRLWGSVYYHKGNFRTKPFENVEKYPTFVEFILIPLYKIFSYALSMEKDKLKNLLRSNFRVNLSQEALQYDPQPFLKHVLQLIFRQQTGLVDAITRCYQPFELFDNKTAHLSIPGKSTPEGTLWAHVLKTVDYGGAEWSLVRIYSGLLKRGDTVRILDTSQSESRQKRQLHDISKTETSNEDEDEDDETPSCEVEEIGLLGGRYVYPVHEAHKGQIVLIKGISSAYIKSATLYSVKSKEDMKQLKFFKPLDYITEAVFKIVLQPLLPRELPKLLDALNKISKYYPGVIIKVEESGEHVILGNGELYMDCLLYDLRASYAKIEIKISDPLTVFSESCSNESFASIPVSNSISRLGEENLPGLSISVAAEPMDSKMIQDLSRNTLGKGQNCLDIDGIMDNPRKLSKILRTEYGWDSLASRNVWSFYNGNVLINDTLPDEISPELLSKYKEQIIQGFYWAVKEGPLAEEPIYGVQYKLLSISVPSDVNIDVMKSQIIPLMKKACYVGLLTAIPILLEPIYEVDITVHAPLLPIVEELMKKRRGSRIYKTIKVAGTPLLEVRGQVPVIESAGFETDLRLSTNGLGMCQLYFWHKIWRKVPGDVLDKDAFIPKLKPAPINSLSRDFVMKTRRRKGISTGGFMSNDGPTLEKYISAELYAQLRENGLVP.

Position 85 is a phosphoserine (Ser85). At Thr88 the chain carries Phosphothreonine. One can recognise a tr-type G domain in the interval Glu131 to Ser338. Positions Gly140 to Thr147 are G1. Gly140–Thr147 provides a ligand contact to GTP. Residues Gly188 to Lys192 form a G2 region. The G3 stretch occupies residues Asp214–Gly217. GTP-binding positions include Asp214–His218 and Asn268–Asp271. Residues Asn268–Asp271 are G4. Residues Ser315–Lys317 form a G5 region. A disordered region spans residues Thr504 to Ser536. The span at Ser509 to Lys520 shows a compositional bias: basic and acidic residues. Positions Ser524–Ser536 are enriched in acidic residues.

The protein belongs to the TRAFAC class translation factor GTPase superfamily. Classic translation factor GTPase family. EF-G/EF-2 subfamily. As to quaternary structure, belongs to the CWC complex (or CEF1-associated complex), a spliceosome sub-complex reminiscent of a late-stage spliceosome composed of the U2, U5 and U6 snRNAs and at least BUD13, BUD31, BRR2, CDC40, CEF1, CLF1, CUS1, CWC2, CWC15, CWC21, CWC22, CWC23, CWC24, CWC25, CWC27, ECM2, HSH155, IST3, ISY1, LEA1, MSL1, NTC20, PRP8, PRP9, PRP11, PRP19, PRP21, PRP22, PRP45, PRP46, SLU7, SMB1, SMD1, SMD2, SMD3, SMX2, SMX3, SNT309, SNU114, SPP2, SYF1, SYF2, RSE1 and YJU2. Component of the U4/U6-U5 tri-snRNP complex composed of the U4, U6 and U5 snRNAs and at least PRP3, PRP4, PRP6, PRP8, PRP18, PRP31, PRP38, SNU13, SNU23, SNU66, SNU114, SPP381, SMB1, SMD1, SMD2, SMD3, SMX2, SMX3, LSM2, LSM3, LSM4, LSM5, LSM6, LSM7, LSM8, BRR2 and DIB1. Interacts (via C-terminus) with CWC21. Interacts (via N-terminus) with PRP8 (via SCwid domain).

It is found in the nucleus. Functionally, component of the U5 snRNP complex required for pre-mRNA splicing. Binds GTP. The polypeptide is Pre-mRNA-splicing factor SNU114 (SNU114) (Saccharomyces cerevisiae (strain ATCC 204508 / S288c) (Baker's yeast)).